A 176-amino-acid chain; its full sequence is Putative ribosomal protein eS10-like (176 aa).

A disordered region spans residues 104–176 (TLHRSRPETG…CGRGRGQPPQ (73 aa)). The span at 108–139 (SRPETGRPRPKGLEGKRPARLTRREADRDTYR) shows a compositional bias: basic and acidic residues.

It belongs to the eukaryotic ribosomal protein eS10 family.

This Homo sapiens (Human) protein is Putative ribosomal protein eS10-like (RPS10P5).